The sequence spans 600 residues: Elongation factor 4 (600 aa).

The region spanning 5–187 (KYIRNFSIIA…AIVNKLPPPK (183 aa)) is the tr-type G domain. GTP-binding positions include 17-22 (DHGKST) and 134-137 (NKLD).

Belongs to the TRAFAC class translation factor GTPase superfamily. Classic translation factor GTPase family. LepA subfamily.

Its subcellular location is the cell inner membrane. It catalyses the reaction GTP + H2O = GDP + phosphate + H(+). In terms of biological role, required for accurate and efficient protein synthesis under certain stress conditions. May act as a fidelity factor of the translation reaction, by catalyzing a one-codon backward translocation of tRNAs on improperly translocated ribosomes. Back-translocation proceeds from a post-translocation (POST) complex to a pre-translocation (PRE) complex, thus giving elongation factor G a second chance to translocate the tRNAs correctly. Binds to ribosomes in a GTP-dependent manner. The chain is Elongation factor 4 from Rickettsia africae (strain ESF-5).